Reading from the N-terminus, the 248-residue chain is Probable transcriptional regulatory protein Syncc9902_0542 (248 aa).

The protein belongs to the TACO1 family.

The protein localises to the cytoplasm. This is Probable transcriptional regulatory protein Syncc9902_0542 from Synechococcus sp. (strain CC9902).